The chain runs to 227 residues: PKHD-type hydroxylase ACICU_00484 (227 aa).

In terms of domain architecture, Fe2OG dioxygenase spans 78–178 (DIIPPLFNRY…RIASFFWVQS (101 aa)). The Fe cation site is built by His-96, Asp-98, and His-159. Arg-169 provides a ligand contact to 2-oxoglutarate.

Requires Fe(2+) as cofactor. L-ascorbate is required as a cofactor.

This chain is PKHD-type hydroxylase ACICU_00484, found in Acinetobacter baumannii (strain ACICU).